The sequence spans 138 residues: Biopolymer transport protein exbD1 (138 aa).

Residues 1 to 16 (MIKSSAKHNDFGLTPD) are Cytoplasmic-facing. The chain crosses the membrane as a helical span at residues 17–37 (LTPLLDIIFIVMVFLLLTASV). Topologically, residues 38–138 (RLESLEVALP…TQLLTEPSHS (101 aa)) are periplasmic.

This sequence belongs to the ExbD/TolR family. As to quaternary structure, the accessory proteins ExbB and ExbD seem to form a complex with TonB.

The protein localises to the cell inner membrane. In terms of biological role, involved in the TonB-dependent energy-dependent transport of various receptor-bound substrates. In Vibrio cholerae serotype O1 (strain ATCC 39315 / El Tor Inaba N16961), this protein is Biopolymer transport protein exbD1 (exbD1).